A 270-amino-acid chain; its full sequence is Glutamate racemase (270 aa).

Residues Asp7–Ser8 and Tyr39–Gly40 each bind substrate. The Proton donor/acceptor role is filled by Cys70. Residue Asn71–Thr72 coordinates substrate. Catalysis depends on Cys194, which acts as the Proton donor/acceptor. Position 195–196 (Thr195–His196) interacts with substrate.

It belongs to the aspartate/glutamate racemases family.

It carries out the reaction L-glutamate = D-glutamate. It functions in the pathway cell wall biogenesis; peptidoglycan biosynthesis. Functionally, provides the (R)-glutamate required for cell wall biosynthesis. In Jannaschia sp. (strain CCS1), this protein is Glutamate racemase.